A 147-amino-acid chain; its full sequence is Hemoglobin subunit beta (147 aa).

Positions 3-147 (EWTDKERSII…VVSALGKQYH (145 aa)) constitute a Globin domain. Positions 64 and 93 each coordinate heme b.

It belongs to the globin family. Hb1 is a heterotetramer of two alpha chains and two beta chains. Red blood cells.

In terms of biological role, involved in oxygen transport from gills to the various peripheral tissues. This is Hemoglobin subunit beta (hbb) from Trematomus bernacchii (Emerald rockcod).